The sequence spans 357 residues: tRNA/tmRNA (uracil-C(5))-methyltransferase (357 aa).

5 residues coordinate S-adenosyl-L-methionine: Gln-180, Tyr-209, Asn-214, Glu-230, and Asp-290. Cys-315 serves as the catalytic Nucleophile. Glu-349 serves as the catalytic Proton acceptor.

It belongs to the class I-like SAM-binding methyltransferase superfamily. RNA M5U methyltransferase family. TrmA subfamily.

It carries out the reaction uridine(54) in tRNA + S-adenosyl-L-methionine = 5-methyluridine(54) in tRNA + S-adenosyl-L-homocysteine + H(+). It catalyses the reaction uridine(341) in tmRNA + S-adenosyl-L-methionine = 5-methyluridine(341) in tmRNA + S-adenosyl-L-homocysteine + H(+). Dual-specificity methyltransferase that catalyzes the formation of 5-methyluridine at position 54 (m5U54) in all tRNAs, and that of position 341 (m5U341) in tmRNA (transfer-mRNA). The polypeptide is tRNA/tmRNA (uracil-C(5))-methyltransferase (Campylobacter jejuni (strain RM1221)).